The following is a 72-amino-acid chain: Sperm protein associated with the nucleus on the X chromosome N1 (72 aa).

The disordered stretch occupies residues 1-40 (MEKPTSSTNGEKRKSPCDSNNKNDEMQETPNRDLVLEPSL). Residues 10–35 (GEKRKSPCDSNNKNDEMQETPNRDLV) show a composition bias toward basic and acidic residues.

It belongs to the SPAN-X family.

The sequence is that of Sperm protein associated with the nucleus on the X chromosome N1 (SPANXN1) from Gorilla gorilla gorilla (Western lowland gorilla).